Here is a 315-residue protein sequence, read N- to C-terminus: Zinc finger transcription factor ref-2 (315 aa).

The C2H2-type 1; atypical zinc-finger motif lies at 83-112; it reads VQCLWETNGQVCMHVCQNSGELSTHISSNH. The C2H2-type 2; degenerate zinc finger occupies 124-146; sequence KGCDREFKMFKAKYKLVNHMRVH. C2H2-type zinc fingers lie at residues 152-174, 180-204, and 210-234; these read FLCD…KRIH, FQCT…MHVH, and YSCM…TKVH. A disordered region spans residues 225-270; the sequence is SSLRKHTKVHENEKKSQLSPEHDESSDSGNASIGTPTTDESLTFSP. The segment covering 233 to 249 has biased composition (basic and acidic residues); that stretch reads VHENEKKSQLSPEHDES. Residues 251–270 are compositionally biased toward polar residues; that stretch reads DSGNASIGTPTTDESLTFSP.

In terms of assembly, interacts with TCF transcription factor pop-1; the interaction is direct and facilitates transcriptional activation; transcription may be repressed by beta-catenin/sys-1.

It is found in the nucleus. The protein localises to the cytoplasm. Transcription factor. Modulates expression of target genes by binding to regulatory elements. Required for normal cell division timing and cell positioning in anterior lineages, acting in a cell-autonomous manner. Required for development, fusion and fate of cells of the ventral epidermis, the Pn.p cells, during larval development; acts in concert with homeobox genes lin-39 and mab-5. Required for the specification of the AIY interneuron. In complex with TCF transcription factor pop-1, positively modulates expression of LIM/homeobox protein ttx-3 in anterior daughter cells of the SMDD/AIY neuron lineage. This Caenorhabditis elegans protein is Zinc finger transcription factor ref-2.